A 276-amino-acid chain; its full sequence is Undecaprenyl-diphosphatase (276 aa).

The next 7 helical transmembrane spans lie at 40-60 (GLAF…TFFW), 98-118 (WLII…KDAI), 121-141 (IFRG…VLYY), 155-175 (MSFK…FPGI), 200-220 (FLLS…DIAT), 227-247 (VLLA…KLLM), and 255-275 (LDIF…LSVV).

It belongs to the UppP family.

The protein localises to the cell membrane. The enzyme catalyses di-trans,octa-cis-undecaprenyl diphosphate + H2O = di-trans,octa-cis-undecaprenyl phosphate + phosphate + H(+). Functionally, catalyzes the dephosphorylation of undecaprenyl diphosphate (UPP). This is Undecaprenyl-diphosphatase from Methanosphaera stadtmanae (strain ATCC 43021 / DSM 3091 / JCM 11832 / MCB-3).